A 177-amino-acid polypeptide reads, in one-letter code: Adenine phosphoribosyltransferase (177 aa).

Belongs to the purine/pyrimidine phosphoribosyltransferase family. Homodimer.

It localises to the cytoplasm. It catalyses the reaction AMP + diphosphate = 5-phospho-alpha-D-ribose 1-diphosphate + adenine. It functions in the pathway purine metabolism; AMP biosynthesis via salvage pathway; AMP from adenine: step 1/1. Functionally, catalyzes a salvage reaction resulting in the formation of AMP, that is energically less costly than de novo synthesis. In Anaeromyxobacter sp. (strain Fw109-5), this protein is Adenine phosphoribosyltransferase.